A 509-amino-acid chain; its full sequence is Methionine--tRNA ligase (509 aa).

The short motif at 12–22 is the 'HIGH' region element; it reads YYVNDVPHIGH. The 'KMSKS' region motif lies at 295-299; it reads KISKS. ATP is bound at residue K298.

This sequence belongs to the class-I aminoacyl-tRNA synthetase family. MetG type 2B subfamily. In terms of assembly, monomer.

Its subcellular location is the cytoplasm. The catalysed reaction is tRNA(Met) + L-methionine + ATP = L-methionyl-tRNA(Met) + AMP + diphosphate. Is required not only for elongation of protein synthesis but also for the initiation of all mRNA translation through initiator tRNA(fMet) aminoacylation. This chain is Methionine--tRNA ligase, found in Rickettsia bellii (strain RML369-C).